The chain runs to 212 residues: Sentrin-specific protease 8 (212 aa).

Met1 carries the post-translational modification N-acetylmethionine. The tract at residues 11–174 (SLLRQSDVSL…MYVICNTEAL (164 aa)) is protease. Active-site residues include His102 and Asp119. Cys163 functions as the Nucleophile in the catalytic mechanism.

Belongs to the peptidase C48 family. Broadly expressed, with highest levels in kidney and pancreas.

Functionally, protease that catalyzes two essential functions in the NEDD8 pathway: processing of full-length NEDD8 to its mature form and deconjugation of NEDD8 from targeted proteins such as cullins or p53. In Homo sapiens (Human), this protein is Sentrin-specific protease 8 (SENP8).